A 220-amino-acid chain; its full sequence is Small ribosomal subunit protein eS8 (220 aa).

Disordered stretches follow at residues 1–41 (MGIS…LSSN) and 131–151 (AKKD…KKSN). A compositionally biased stretch (basic residues) spans 8 to 26 (MHKRRATGGKQKAWRKKRK).

Belongs to the eukaryotic ribosomal protein eS8 family.

This Oryza sativa subsp. japonica (Rice) protein is Small ribosomal subunit protein eS8 (RPS8).